The primary structure comprises 200 residues: Large ribosomal subunit protein uL4 (200 aa).

The tract at residues 42-65 (TRAQKTRSEVSGGGAKPWRQKGTG) is disordered.

This sequence belongs to the universal ribosomal protein uL4 family. In terms of assembly, part of the 50S ribosomal subunit.

Functionally, one of the primary rRNA binding proteins, this protein initially binds near the 5'-end of the 23S rRNA. It is important during the early stages of 50S assembly. It makes multiple contacts with different domains of the 23S rRNA in the assembled 50S subunit and ribosome. Forms part of the polypeptide exit tunnel. This chain is Large ribosomal subunit protein uL4, found in Aliivibrio fischeri (strain MJ11) (Vibrio fischeri).